A 126-amino-acid chain; its full sequence is MKWTFILAVAAGGSLGSVARYLVGIGFGRLLGPKFPWGTLFINITGSLLIGLFAGLFAIRWNLPQAVRIFLIVGICGGYTTFSTFSLDSFYLIERGEVAAAGAYMIASVVLSVGALIAGIQIVRVL.

A run of 4 helical transmembrane segments spans residues 5–25 (FILA…LVGI), 39–59 (TLFI…LFAI), 69–89 (IFLI…SLDS), and 100–120 (AAGA…IAGI). The Na(+) site is built by Gly-77 and Thr-80.

Belongs to the fluoride channel Fluc/FEX (TC 1.A.43) family.

The protein resides in the cell inner membrane. It carries out the reaction fluoride(in) = fluoride(out). Na(+) is not transported, but it plays an essential structural role and its presence is essential for fluoride channel function. Its function is as follows. Fluoride-specific ion channel. Important for reducing fluoride concentration in the cell, thus reducing its toxicity. The sequence is that of Fluoride-specific ion channel FluC 1 from Nitrobacter hamburgensis (strain DSM 10229 / NCIMB 13809 / X14).